Consider the following 413-residue polypeptide: Serine hydroxymethyltransferase (413 aa).

Residues Leu-115 and 119-121 (GHL) contribute to the (6S)-5,6,7,8-tetrahydrofolate site. Residue Lys-224 is modified to N6-(pyridoxal phosphate)lysine.

Belongs to the SHMT family. Homodimer. Pyridoxal 5'-phosphate is required as a cofactor.

The protein localises to the cytoplasm. It carries out the reaction (6R)-5,10-methylene-5,6,7,8-tetrahydrofolate + glycine + H2O = (6S)-5,6,7,8-tetrahydrofolate + L-serine. Its pathway is one-carbon metabolism; tetrahydrofolate interconversion. It participates in amino-acid biosynthesis; glycine biosynthesis; glycine from L-serine: step 1/1. In terms of biological role, catalyzes the reversible interconversion of serine and glycine with tetrahydrofolate (THF) serving as the one-carbon carrier. This reaction serves as the major source of one-carbon groups required for the biosynthesis of purines, thymidylate, methionine, and other important biomolecules. Also exhibits THF-independent aldolase activity toward beta-hydroxyamino acids, producing glycine and aldehydes, via a retro-aldol mechanism. The sequence is that of Serine hydroxymethyltransferase from Mycoplasma capricolum subsp. capricolum (strain California kid / ATCC 27343 / NCTC 10154).